Consider the following 109-residue polypeptide: Large ribosomal subunit protein uL22 (109 aa).

This sequence belongs to the universal ribosomal protein uL22 family. In terms of assembly, part of the 50S ribosomal subunit.

Functionally, this protein binds specifically to 23S rRNA; its binding is stimulated by other ribosomal proteins, e.g. L4, L17, and L20. It is important during the early stages of 50S assembly. It makes multiple contacts with different domains of the 23S rRNA in the assembled 50S subunit and ribosome. The globular domain of the protein is located near the polypeptide exit tunnel on the outside of the subunit, while an extended beta-hairpin is found that lines the wall of the exit tunnel in the center of the 70S ribosome. This Cupriavidus necator (strain ATCC 17699 / DSM 428 / KCTC 22496 / NCIMB 10442 / H16 / Stanier 337) (Ralstonia eutropha) protein is Large ribosomal subunit protein uL22.